The chain runs to 492 residues: 6-phosphogluconate dehydrogenase, decarboxylating 2 (492 aa).

NADP(+) contacts are provided by residues 12 to 17, 35 to 37, 77 to 79, and asparagine 105; these read GLAVMG, NRT, and IKA. Substrate contacts are provided by residues asparagine 105 and 131-133; that span reads SGG. Residue lysine 185 is the Proton acceptor of the active site. 188–189 contacts substrate; sequence HN. The active-site Proton donor is the glutamate 192. Substrate-binding residues include tyrosine 193, lysine 262, arginine 289, arginine 449, and histidine 455.

Belongs to the 6-phosphogluconate dehydrogenase family. In terms of assembly, homodimer.

It catalyses the reaction 6-phospho-D-gluconate + NADP(+) = D-ribulose 5-phosphate + CO2 + NADPH. The protein operates within carbohydrate degradation; pentose phosphate pathway; D-ribulose 5-phosphate from D-glucose 6-phosphate (oxidative stage): step 3/3. In terms of biological role, catalyzes the oxidative decarboxylation of 6-phosphogluconate to ribulose 5-phosphate and CO(2), with concomitant reduction of NADP to NADPH. This Saccharomyces cerevisiae (strain ATCC 204508 / S288c) (Baker's yeast) protein is 6-phosphogluconate dehydrogenase, decarboxylating 2 (GND2).